The following is a 75-amino-acid chain: UPF0291 protein lin1342 (75 aa).

Positions 55-75 (IDPKGNDVTPHKIKQMRKNKK) are disordered. The segment covering 65–75 (HKIKQMRKNKK) has biased composition (basic residues).

Belongs to the UPF0291 family.

Its subcellular location is the cytoplasm. In Listeria innocua serovar 6a (strain ATCC BAA-680 / CLIP 11262), this protein is UPF0291 protein lin1342.